We begin with the raw amino-acid sequence, 311 residues long: Homoserine kinase (311 aa).

88-98 (PEGLGLGSSGA) contacts ATP.

Belongs to the GHMP kinase family. Homoserine kinase subfamily.

The protein localises to the cytoplasm. The catalysed reaction is L-homoserine + ATP = O-phospho-L-homoserine + ADP + H(+). Its pathway is amino-acid biosynthesis; L-threonine biosynthesis; L-threonine from L-aspartate: step 4/5. In terms of biological role, catalyzes the ATP-dependent phosphorylation of L-homoserine to L-homoserine phosphate. The chain is Homoserine kinase from Saccharolobus islandicus (strain L.S.2.15 / Lassen #1) (Sulfolobus islandicus).